The primary structure comprises 436 residues: uncharacterized protein (436 aa).

Residues 1-21 (MILLQVICTIWTCLFIPLLNA) traverse the membrane as a helical segment. BNR repeat units follow at residues 57 to 68 (WISSDSGENWEA) and 101 to 112 (YVTDDRGKSWRA). The N-linked (GlcNAc...) asparagine glycan is linked to Asn157. BNR repeat units follow at residues 229 to 240 (ALSTDGGKTFKK) and 394 to 405 (KISVDNGLTWSN).

It is found in the membrane. This is an uncharacterized protein from Saccharomyces cerevisiae (strain ATCC 204508 / S288c) (Baker's yeast).